A 406-amino-acid chain; its full sequence is Acetyltransferase sirH (406 aa).

6 helical membrane passes run 9–29 (IFIE…FALG), 32–52 (AHTF…CQSL), 63–83 (LLSN…WILL), 295–315 (VQLF…ALLC), 323–343 (SALF…HVIA), and 358–378 (FIGF…WVGS).

This sequence belongs to the wax synthase family.

It is found in the membrane. It participates in mycotoxin biosynthesis. Acetyltransferase; part of the gene cluster that mediates the biosynthesis of sirodesmin PL, an epipolythiodioxopiperazine (ETP) characterized by a disulfide bridged cyclic dipeptide and that acts as a phytotoxin which is involved in the blackleg didease of canola. SirD catalyzes the O-prenylation of L-tyrosine (L-Tyr) in the presence of dimethylallyl diphosphate (DMAPP) to yield 4-O-dimethylallyl-L-Tyr, and therefore represents probably the first pathway-specific enzyme in the biosynthesis of sirodesmin PL. 4-O-dimethylallyl-L-Tyr, then undergoes condensation with L-Ser in a reaction catalyzed by the non-ribosomal peptide synthase sirP to form the diketopiperazine (DKP) backbone. Further bishydroxylation of the DKP performed by the cytochrome P450 monooxygenase sirC leads to the production of the intermediate phomamide. This step is essential to form the reactive thiol group required for toxicity of sirodesmin PL. The next steps of sirodesmin biosynthesis are not well understood yet, but some predictions could be made from intermediate compounds identification. Phomamide is converted into phomalizarine via oxidation, probably by sirT. Further oxidation, methylation (by sirM or sirN) and reduction steps convert phomalizarine to deacetyl sirodesmin. Finally, acetyltransferase sirH probably acetylates deacetyl sirodesmin to produce sirodesmin PL. The sequence is that of Acetyltransferase sirH from Leptosphaeria maculans (Blackleg fungus).